Reading from the N-terminus, the 98-residue chain is uncharacterized protein (98 aa).

Belongs to the YciI family. In terms of assembly, homodimer.

This is an uncharacterized protein from Haemophilus influenzae (strain ATCC 51907 / DSM 11121 / KW20 / Rd).